The primary structure comprises 118 residues: Small ribosomal subunit protein uS13 (118 aa).

Residues 94–118 (GLPVRGQRTKTNARTRKGPRKPIKK) form a disordered region.

The protein belongs to the universal ribosomal protein uS13 family. As to quaternary structure, part of the 30S ribosomal subunit. Forms a loose heterodimer with protein S19. Forms two bridges to the 50S subunit in the 70S ribosome.

In terms of biological role, located at the top of the head of the 30S subunit, it contacts several helices of the 16S rRNA. In the 70S ribosome it contacts the 23S rRNA (bridge B1a) and protein L5 of the 50S subunit (bridge B1b), connecting the 2 subunits; these bridges are implicated in subunit movement. Contacts the tRNAs in the A and P-sites. This Erwinia tasmaniensis (strain DSM 17950 / CFBP 7177 / CIP 109463 / NCPPB 4357 / Et1/99) protein is Small ribosomal subunit protein uS13.